Consider the following 347-residue polypeptide: Beta-hexosaminidase (347 aa).

Residues D64, R72, R138, and 168 to 169 (KH) each bind substrate. Catalysis depends on H181, which acts as the Proton donor/acceptor. The Nucleophile role is filled by D251.

Belongs to the glycosyl hydrolase 3 family. NagZ subfamily.

The protein localises to the cytoplasm. The enzyme catalyses Hydrolysis of terminal non-reducing N-acetyl-D-hexosamine residues in N-acetyl-beta-D-hexosaminides.. It participates in cell wall biogenesis; peptidoglycan recycling. Plays a role in peptidoglycan recycling by cleaving the terminal beta-1,4-linked N-acetylglucosamine (GlcNAc) from peptide-linked peptidoglycan fragments, giving rise to free GlcNAc, anhydro-N-acetylmuramic acid and anhydro-N-acetylmuramic acid-linked peptides. The polypeptide is Beta-hexosaminidase (Thioalkalivibrio sulfidiphilus (strain HL-EbGR7)).